Consider the following 290-residue polypeptide: Small ribosomal subunit protein uS11 (290 aa).

The tract at residues aspartate 243 to alanine 271 is disordered. A compositionally biased stretch (low complexity) spans tryptophan 257–alanine 271.

It belongs to the universal ribosomal protein uS2 family. Component of the small ribosomal subunit (SSU). Mature N.crassa ribosomes consist of a small (40S) and a large (60S) subunit. The 40S small subunit contains 1 molecule of ribosomal RNA (18S rRNA) and at least 32 different proteins. The large 60S subunit contains 3 rRNA molecules (26S, 5.8S and 5S rRNA) and at least 42 different proteins. Interacts with rps21.

Its subcellular location is the cytoplasm. Component of the ribosome, a large ribonucleoprotein complex responsible for the synthesis of proteins in the cell. The small ribosomal subunit (SSU) binds messenger RNAs (mRNAs) and translates the encoded message by selecting cognate aminoacyl-transfer RNA (tRNA) molecules. The large subunit (LSU) contains the ribosomal catalytic site termed the peptidyl transferase center (PTC), which catalyzes the formation of peptide bonds, thereby polymerizing the amino acids delivered by tRNAs into a polypeptide chain. The nascent polypeptides leave the ribosome through a tunnel in the LSU and interact with protein factors that function in enzymatic processing, targeting, and the membrane insertion of nascent chains at the exit of the ribosomal tunnel. uS2 is required for the assembly and/or stability of the 40S ribosomal subunit. Required for the processing of the 20S rRNA-precursor to mature 18S rRNA in a late step of the maturation of 40S ribosomal subunits. This chain is Small ribosomal subunit protein uS11, found in Neurospora crassa (strain ATCC 24698 / 74-OR23-1A / CBS 708.71 / DSM 1257 / FGSC 987).